The chain runs to 1152 residues: DNA-directed RNA polymerase subunit beta' (1152 aa).

Residues C60, C62, C75, and C78 each contribute to the Zn(2+) site. 3 residues coordinate Mg(2+): D449, D451, and D453. Residues C779, C853, C860, and C863 each contribute to the Zn(2+) site.

This sequence belongs to the RNA polymerase beta' chain family. As to quaternary structure, the RNAP catalytic core consists of 2 alpha, 1 beta, 1 beta' and 1 omega subunit. When a sigma factor is associated with the core the holoenzyme is formed, which can initiate transcription. Mg(2+) serves as cofactor. The cofactor is Zn(2+).

The enzyme catalyses RNA(n) + a ribonucleoside 5'-triphosphate = RNA(n+1) + diphosphate. Its function is as follows. DNA-dependent RNA polymerase catalyzes the transcription of DNA into RNA using the four ribonucleoside triphosphates as substrates. This Carboxydothermus hydrogenoformans (strain ATCC BAA-161 / DSM 6008 / Z-2901) protein is DNA-directed RNA polymerase subunit beta'.